Consider the following 131-residue polypeptide: C-type natriuretic peptide 1 (131 aa).

Residues 1-22 form the signal peptide; sequence MLYPALLCAALLLIAPLGHTEG. Residues 23–109 constitute a propeptide that is removed on maturation; sequence RTLHPSPDAI…KRAVMDRSRR (87 aa). An intrachain disulfide couples C115 to C131.

This sequence belongs to the natriuretic peptide family. Expressed in brain and to a low extent in atrium.

It is found in the secreted. Its function is as follows. Exhibits natriuretic and vasodepressant activity. Has a cGMP-stimulating activity. In Oncorhynchus mykiss (Rainbow trout), this protein is C-type natriuretic peptide 1.